A 1077-amino-acid chain; its full sequence is Histone deacetylase 4 (1077 aa).

Residues 66 to 169 (REQQLQQELL…GKESAVASTE (104 aa)) are a coiled coil. The interaction with MEF2A stretch occupies residues 117 to 312 (MLAMKHQQEL…NSSSGNVSTE (196 aa)). Residues 132–162 (KLERHRQEQELEKQHREQKLQQLKNKEKGKE) are compositionally biased toward basic and acidic residues. Disordered regions lie at residues 132–167 (KLERHRQEQELEKQHREQKLQQLKNKEKGKESAVAS), 204–225 (KTQHSSLDQSSPPQSGVSASYN), and 239–327 (PLRK…AETS). Residues 205 to 224 (TQHSSLDQSSPPQSGVSASY) show a composition bias toward polar residues. Position 209 is a phosphoserine (Ser-209). Position 245 is a phosphoserine; by CaMK4 and SIK1 (Ser-245). Residues 258–273 (KVAERRSSPLLRRKDG) show a composition bias toward basic and acidic residues. The segment covering 289-310 (SACSSAPGSGPSSPNSSSGNVS) has biased composition (low complexity). The PxLPxI/L motif; mediates interaction with ANKRA2 and 14-3-3 proteins signature appears at 348 to 353 (PSLPNI). Position 349 is a phosphoserine (Ser-349). Residue Ser-466 is modified to Phosphoserine; by CaMK4 and SIK1. 3 disordered regions span residues 508-530 (SKPSEPPRQPESHPEETEEELRE), 542-582 (RLPG…RPAT), and 623-646 (RPLSRAQSSPASATFPMSVQEPPT). A compositionally biased stretch (basic and acidic residues) spans 515-530 (RQPESHPEETEEELRE). A Glycyl lysine isopeptide (Lys-Gly) (interchain with G-Cter in SUMO) cross-link involves residue Lys-557. A phosphoserine mark is found at Ser-563, Ser-630, and Ser-631. Polar residues predominate over residues 627-639 (RAQSSPASATFPM). Residues 653 to 1077 (GLVYDTLMLK…EEPMEEEPPL (425 aa)) are histone deacetylase. Zn(2+) contacts are provided by Cys-665, Cys-667, His-673, and Cys-744. Residue His-796 is part of the active site. Residues 1044 to 1077 (EEAETVTAMASLSVGVKPAEKRSEEEPMEEEPPL) carry the Nuclear export signal motif. The tract at residues 1052 to 1077 (MASLSVGVKPAEKRSEEEPMEEEPPL) is disordered.

This sequence belongs to the histone deacetylase family. HD type 2 subfamily. Homodimer. Homodimerization via its N-terminal domain. Interacts with HDAC7. Interacts with MEF2A, MEF2C, MEF2D, MORC2 and NR2C1. Interacts with a 14-3-3 chaperone proteins in a phosphorylation dependent manner. Interacts with 14-3-3 protein YWHAB. Interacts with KDM5B and AHRR. Interacts with BTBD14B. Interacts with MYOCD. Interacts (via PxLPxI/L motif) with ANKRA2 (via ankyrin repeats). Interacts with CUL7 (as part of the 3M complex); negatively regulated by ANKRA2. Interacts with EP300 in the presence of TFAP2C. Interacts with HSPA1A and HSPA1B leading to their deacetylation at 'Lys-77'. Interacts with ZBTB7B; the interaction allows the recruitment of HDAC4 on CD8 loci for deacetylation and possible inhibition of CD8 genes expression. Interacts with DHX36. Interacts with SIK3; this interaction leads to HDAC4 retention in the cytoplasm. Post-translationally, phosphorylated by CaMK4 at Ser-245, Ser-466 and Ser-630. Phosphorylation at other residues by CaMK2D is required for the interaction with 14-3-3. Phosphorylation at Ser-349, within the PxLPxI/L motif, impairs the binding of ANKRA2 but generates a high-affinity docking site for 14-3-3. In terms of processing, sumoylation on Lys-557 is promoted by the E3 SUMO-protein ligase RANBP2, and prevented by phosphorylation by CaMK4.

The protein resides in the nucleus. The protein localises to the cytoplasm. The enzyme catalyses N(6)-acetyl-L-lysyl-[histone] + H2O = L-lysyl-[histone] + acetate. Its function is as follows. Responsible for the deacetylation of lysine residues on the N-terminal part of the core histones (H2A, H2B, H3 and H4). Histone deacetylation gives a tag for epigenetic repression and plays an important role in transcriptional regulation, cell cycle progression and developmental events. Histone deacetylases act via the formation of large multiprotein complexes. Involved in muscle maturation via its interaction with the myocyte enhancer factors such as MEF2A, MEF2C and MEF2D. Deacetylates HSPA1A and HSPA1B at 'Lys-77' leading to their preferential binding to co-chaperone STUB1. The chain is Histone deacetylase 4 (Hdac4) from Rattus norvegicus (Rat).